The chain runs to 316 residues: Transaldolase (316 aa).

Lys-127 acts as the Schiff-base intermediate with substrate in catalysis.

It belongs to the transaldolase family. Type 2 subfamily.

It is found in the cytoplasm. It catalyses the reaction D-sedoheptulose 7-phosphate + D-glyceraldehyde 3-phosphate = D-erythrose 4-phosphate + beta-D-fructose 6-phosphate. It functions in the pathway carbohydrate degradation; pentose phosphate pathway; D-glyceraldehyde 3-phosphate and beta-D-fructose 6-phosphate from D-ribose 5-phosphate and D-xylulose 5-phosphate (non-oxidative stage): step 2/3. In terms of biological role, transaldolase is important for the balance of metabolites in the pentose-phosphate pathway. The chain is Transaldolase from Helicobacter pylori (strain Shi470).